The primary structure comprises 832 residues: Translation initiation factor IF-2 (832 aa).

The interval 1–244 (MSDTDGKKTL…KAMGGSQERE (244 aa)) is disordered. The segment covering 18-27 (TGQVKQSFSH) has biased composition (polar residues). Residues 81–141 (KANESEEAER…EARKKAEADA (61 aa)) show a composition bias toward basic and acidic residues. Residues 142–171 (SSKPAAARSKADDPATMDPAAAQAAEARGA) are compositionally biased toward low complexity. Basic and acidic residues-rich tracts occupy residues 178–201 (PRKE…DDRR) and 227–244 (RKQE…QERE). Residues 329-497 (PRPPVITVMG…SIALQAEILE (169 aa)) enclose the tr-type G domain. Positions 338–345 (GHVDHGKT) are G1. GTP is bound at residue 338-345 (GHVDHGKT). Residues 363 to 367 (GITQH) form a G2 region. The interval 385–388 (DTPG) is G3. GTP is bound by residues 385-389 (DTPGH) and 439-442 (NKID). The G4 stretch occupies residues 439 to 442 (NKID). The interval 475–477 (SAI) is G5.

Belongs to the TRAFAC class translation factor GTPase superfamily. Classic translation factor GTPase family. IF-2 subfamily.

It localises to the cytoplasm. In terms of biological role, one of the essential components for the initiation of protein synthesis. Protects formylmethionyl-tRNA from spontaneous hydrolysis and promotes its binding to the 30S ribosomal subunits. Also involved in the hydrolysis of GTP during the formation of the 70S ribosomal complex. The protein is Translation initiation factor IF-2 of Dinoroseobacter shibae (strain DSM 16493 / NCIMB 14021 / DFL 12).